Consider the following 372-residue polypeptide: 4-hydroxy-3-methylbut-2-en-1-yl diphosphate synthase (flavodoxin) (372 aa).

Positions 270, 273, 305, and 312 each coordinate [4Fe-4S] cluster.

Belongs to the IspG family. [4Fe-4S] cluster is required as a cofactor.

It catalyses the reaction (2E)-4-hydroxy-3-methylbut-2-enyl diphosphate + oxidized [flavodoxin] + H2O + 2 H(+) = 2-C-methyl-D-erythritol 2,4-cyclic diphosphate + reduced [flavodoxin]. It functions in the pathway isoprenoid biosynthesis; isopentenyl diphosphate biosynthesis via DXP pathway; isopentenyl diphosphate from 1-deoxy-D-xylulose 5-phosphate: step 5/6. Functionally, converts 2C-methyl-D-erythritol 2,4-cyclodiphosphate (ME-2,4cPP) into 1-hydroxy-2-methyl-2-(E)-butenyl 4-diphosphate. This is 4-hydroxy-3-methylbut-2-en-1-yl diphosphate synthase (flavodoxin) from Escherichia coli O8 (strain IAI1).